The primary structure comprises 843 residues: Protein translocase subunit SecA (843 aa).

ATP is bound by residues Gln91, 109 to 113 (GEGKT), and Asp498. Positions 796–825 (DFGKAEHVSAEDGKEKAKAEPYVKDEHIGR) are enriched in basic and acidic residues. Residues 796-833 (DFGKAEHVSAEDGKEKAKAEPYVKDEHIGRNDPCPCGS) are disordered. Residues Cys829, Cys831, Cys840, and His841 each contribute to the Zn(2+) site.

This sequence belongs to the SecA family. Monomer and homodimer. Part of the essential Sec protein translocation apparatus which comprises SecA, SecYEG and auxiliary proteins SecDF. Other proteins may also be involved. Zn(2+) is required as a cofactor.

It is found in the cell membrane. It localises to the cytoplasm. The enzyme catalyses ATP + H2O + cellular proteinSide 1 = ADP + phosphate + cellular proteinSide 2.. In terms of biological role, part of the Sec protein translocase complex. Interacts with the SecYEG preprotein conducting channel. Has a central role in coupling the hydrolysis of ATP to the transfer of proteins into and across the cell membrane, serving as an ATP-driven molecular motor driving the stepwise translocation of polypeptide chains across the membrane. The chain is Protein translocase subunit SecA from Staphylococcus saprophyticus subsp. saprophyticus (strain ATCC 15305 / DSM 20229 / NCIMB 8711 / NCTC 7292 / S-41).